The primary structure comprises 498 residues: Cytochrome c-552 (498 aa).

The signal sequence occupies residues 1 to 31 (MKNKERKLKSWQGWLIFSSSMVVVFCLGLLA). Residue histidine 119 coordinates heme c. Heme-binding residues include cysteine 148, cysteine 151, and lysine 152. 6 residues coordinate heme c: cysteine 186, cysteine 189, histidine 190, cysteine 228, cysteine 231, and histidine 232. Ca(2+)-binding residues include glutamate 234, tyrosine 235, lysine 280, and glutamine 282. Substrate is bound at residue tyrosine 235. Histidine 283 serves as a coordination point for substrate. Residues histidine 294, cysteine 301, cysteine 304, histidine 305, histidine 319, cysteine 332, cysteine 335, histidine 336, and histidine 411 each coordinate heme c.

It belongs to the cytochrome c-552 family. It depends on Ca(2+) as a cofactor. Requires heme c as cofactor.

It localises to the periplasm. It catalyses the reaction 6 Fe(III)-[cytochrome c] + NH4(+) + 2 H2O = 6 Fe(II)-[cytochrome c] + nitrite + 8 H(+). It functions in the pathway nitrogen metabolism; nitrate reduction (assimilation). Its function is as follows. Catalyzes the reduction of nitrite to ammonia, consuming six electrons in the process. The polypeptide is Cytochrome c-552 (Porphyromonas gingivalis (strain ATCC BAA-308 / W83)).